The sequence spans 271 residues: Formamidopyrimidine-DNA glycosylase (271 aa).

Residue Pro-2 is the Schiff-base intermediate with DNA of the active site. The active-site Proton donor is Glu-3. Catalysis depends on Lys-58, which acts as the Proton donor; for beta-elimination activity. Arg-110 and Arg-152 together coordinate DNA. The segment at 237-271 (AVYGQTGKPCTVCGTPIARIRLGNRSTWFCPVCQK) adopts an FPG-type zinc-finger fold. The active-site Proton donor; for delta-elimination activity is Arg-261.

It belongs to the FPG family. Monomer. It depends on Zn(2+) as a cofactor.

It catalyses the reaction Hydrolysis of DNA containing ring-opened 7-methylguanine residues, releasing 2,6-diamino-4-hydroxy-5-(N-methyl)formamidopyrimidine.. The catalysed reaction is 2'-deoxyribonucleotide-(2'-deoxyribose 5'-phosphate)-2'-deoxyribonucleotide-DNA = a 3'-end 2'-deoxyribonucleotide-(2,3-dehydro-2,3-deoxyribose 5'-phosphate)-DNA + a 5'-end 5'-phospho-2'-deoxyribonucleoside-DNA + H(+). Its function is as follows. Involved in base excision repair of DNA damaged by oxidation or by mutagenic agents. Acts as a DNA glycosylase that recognizes and removes damaged bases. Has a preference for oxidized purines, such as 7,8-dihydro-8-oxoguanine (8-oxoG). Has AP (apurinic/apyrimidinic) lyase activity and introduces nicks in the DNA strand. Cleaves the DNA backbone by beta-delta elimination to generate a single-strand break at the site of the removed base with both 3'- and 5'-phosphates. The chain is Formamidopyrimidine-DNA glycosylase from Geobacter sulfurreducens (strain ATCC 51573 / DSM 12127 / PCA).